We begin with the raw amino-acid sequence, 159 residues long: Protein UXT homolog (159 aa).

Belongs to the UXT family.

The protein is Protein UXT homolog of Nematostella vectensis (Starlet sea anemone).